Reading from the N-terminus, the 163-residue chain is 2-C-methyl-D-erythritol 2,4-cyclodiphosphate synthase (163 aa).

2 residues coordinate a divalent metal cation: aspartate 8 and histidine 10. 4-CDP-2-C-methyl-D-erythritol 2-phosphate contacts are provided by residues 8–10 (DVH) and 34–35 (HS). An a divalent metal cation-binding site is contributed by histidine 42. Residues 56–58 (DIG), 132–135 (TTTE), phenylalanine 139, and arginine 142 contribute to the 4-CDP-2-C-methyl-D-erythritol 2-phosphate site.

The protein belongs to the IspF family. Homotrimer. The cofactor is a divalent metal cation.

The catalysed reaction is 4-CDP-2-C-methyl-D-erythritol 2-phosphate = 2-C-methyl-D-erythritol 2,4-cyclic diphosphate + CMP. Its pathway is isoprenoid biosynthesis; isopentenyl diphosphate biosynthesis via DXP pathway; isopentenyl diphosphate from 1-deoxy-D-xylulose 5-phosphate: step 4/6. Functionally, involved in the biosynthesis of isopentenyl diphosphate (IPP) and dimethylallyl diphosphate (DMAPP), two major building blocks of isoprenoid compounds. Catalyzes the conversion of 4-diphosphocytidyl-2-C-methyl-D-erythritol 2-phosphate (CDP-ME2P) to 2-C-methyl-D-erythritol 2,4-cyclodiphosphate (ME-CPP) with a corresponding release of cytidine 5-monophosphate (CMP). The chain is 2-C-methyl-D-erythritol 2,4-cyclodiphosphate synthase from Moorella thermoacetica (strain ATCC 39073 / JCM 9320).